The primary structure comprises 456 residues: uncharacterized protein (456 aa).

In terms of domain architecture, TRAM spans 3-61 (LMRKNETREFLIEDIEFPAVGVAFYNDKKVYIKGAVPGQKVLARVSKVRREKIEAKLKE). [4Fe-4S] cluster-binding residues include cysteine 74, cysteine 80, cysteine 83, and cysteine 163. S-adenosyl-L-methionine-binding residues include glutamine 289, tyrosine 318, glutamate 339, and aspartate 384. Residue cysteine 411 is the Nucleophile of the active site.

Belongs to the class I-like SAM-binding methyltransferase superfamily. RNA M5U methyltransferase family.

This is an uncharacterized protein from Clostridium acetobutylicum (strain ATCC 824 / DSM 792 / JCM 1419 / IAM 19013 / LMG 5710 / NBRC 13948 / NRRL B-527 / VKM B-1787 / 2291 / W).